Consider the following 431-residue polypeptide: Serine/threonine-protein kinase Sgk1 (431 aa).

The interval 1–60 (MTVKTEAARDTLTYSRMRGMVAILIAFMKQRRMGLNDFIQKIANNSYACKHPEVQSILKI) is necessary for localization to the mitochondria. Positions 64 to 92 (QEPELMNANPSPPPSPSQQINLGPSSNPH) are disordered. Phosphoserine is present on serine 74. At serine 78 the chain carries Phosphoserine; by MAPK7. Polar residues predominate over residues 81–91 (QQINLGPSSNP). A Protein kinase domain is found at 98 to 355 (FHFLKVIGKG…FMEIKNHVFF (258 aa)). Residues 104-112 (IGKGSFGKV) and lysine 127 contribute to the ATP site. Residues 131 to 141 (KKAILKKKEEK) carry the Nuclear localization signal motif. The Proton acceptor role is filled by aspartate 222. Position 256 is a phosphothreonine; by PDPK1 (threonine 256). One can recognise an AGC-kinase C-terminal domain in the interval 356–431 (SLINWEDLIN…SYAPPMDSFL (76 aa)). At threonine 369 the chain carries Phosphothreonine; by PKA. 3 positions are modified to phosphoserine: serine 397, serine 401, and serine 422.

It belongs to the protein kinase superfamily. AGC Ser/Thr protein kinase family. As to quaternary structure, homodimer; disulfide-linked. Forms a trimeric complex with FBXW7 and NOTCH1. Interacts with MAPK3/ERK1, MAPK1/ERK2, MAP2K1/MEK1, MAP2K2/MEK2, NEDD4, NEDD4L, MAPT/TAU, MAPK7, CREB1, SLC9A3R2/NHERF2 and KCNJ1/ROMK1. Associates with the mammalian target of rapamycin complex 2 (mTORC2) via an interaction with MAPKAP1/SIN1. Regulated by phosphorylation. Activated by phosphorylation on Ser-422 by mTORC2, transforming it into a substrate for PDPK1 which phosphorylates it on Thr-256. Phosphorylation on Ser-397 and Ser-401 are also essential for its activity. Phosphorylation on Ser-78 by MAPK7 is required for growth factor-induced cell cycle progression. Post-translationally, ubiquitinated by NEDD4L; which promotes proteasomal degradation. Ubiquitinated by SYVN1 at the endoplasmic reticulum; which promotes rapid proteasomal degradation and maintains a high turnover rate in resting cells.

It is found in the cytoplasm. The protein resides in the nucleus. The protein localises to the endoplasmic reticulum membrane. Its subcellular location is the cell membrane. It localises to the mitochondrion. It catalyses the reaction L-seryl-[protein] + ATP = O-phospho-L-seryl-[protein] + ADP + H(+). It carries out the reaction L-threonyl-[protein] + ATP = O-phospho-L-threonyl-[protein] + ADP + H(+). Its activity is regulated as follows. Two specific sites, one in the kinase domain (Thr-256) and the other in the C-terminal regulatory region (Ser-422), need to be phosphorylated for its full activation. Phosphorylation at Ser-397 and Ser-401 are also essential for its activity. Activated by WNK1, WNK2, WNK3 and WNK4; which promote phosphorylation by mTORC2. Functionally, serine/threonine-protein kinase which is involved in the regulation of a wide variety of ion channels, membrane transporters, cellular enzymes, transcription factors, neuronal excitability, cell growth, proliferation, survival, migration and apoptosis. Plays an important role in cellular stress response. Contributes to regulation of renal Na(+) retention, renal K(+) elimination, salt appetite, gastric acid secretion, intestinal Na(+)/H(+) exchange and nutrient transport, insulin-dependent salt sensitivity of blood pressure, salt sensitivity of peripheral glucose uptake, cardiac repolarization and memory consolidation. Up-regulates Na(+) channels: SCNN1A/ENAC, SCN5A and ASIC1/ACCN2, K(+) channels: KCNJ1/ROMK1, KCNA1-5, KCNQ1-5 and KCNE1, epithelial Ca(2+) channels: TRPV5 and TRPV6, chloride channels: BSND, CLCN2 and CFTR, glutamate transporters: SLC1A3/EAAT1, SLC1A2 /EAAT2, SLC1A1/EAAT3, SLC1A6/EAAT4 and SLC1A7/EAAT5, amino acid transporters: SLC1A5/ASCT2, SLC38A1/SN1 and SLC6A19, creatine transporter: SLC6A8, Na(+)/dicarboxylate cotransporter: SLC13A2/NADC1, Na(+)-dependent phosphate cotransporter: SLC34A2/NAPI-2B, glutamate receptor: GRIK2/GLUR6. Up-regulates carriers: SLC9A3/NHE3, SLC12A1/NKCC2, SLC12A3/NCC, SLC5A3/SMIT, SLC2A1/GLUT1, SLC5A1/SGLT1 and SLC15A2/PEPT2. Regulates enzymes: GSK3A/B, PMM2 and Na(+)/K(+) ATPase, and transcription factors: CTNNB1 and nuclear factor NF-kappa-B. Stimulates sodium transport into epithelial cells by enhancing the stability and expression of SCNN1A/ENAC. This is achieved by phosphorylating the NEDD4L ubiquitin E3 ligase, promoting its interaction with 14-3-3 proteins, thereby preventing it from binding to SCNN1A/ENAC and targeting it for degradation. Regulates store-operated Ca(+2) entry (SOCE) by stimulating ORAI1 and STIM1. Regulates KCNJ1/ROMK1 directly via its phosphorylation or indirectly via increased interaction with SLC9A3R2/NHERF2. Phosphorylates MDM2 and activates MDM2-dependent ubiquitination of p53/TP53. Phosphorylates MAPT/TAU and mediates microtubule depolymerization and neurite formation in hippocampal neurons. Phosphorylates SLC2A4/GLUT4 and up-regulates its activity. Phosphorylates APBB1/FE65 and promotes its localization to the nucleus. Phosphorylates MAPK1/ERK2 and activates it by enhancing its interaction with MAP2K1/MEK1 and MAP2K2/MEK2. Phosphorylates FBXW7 and plays an inhibitory role in the NOTCH1 signaling. Phosphorylates FOXO1 resulting in its relocalization from the nucleus to the cytoplasm. Phosphorylates FOXO3, promoting its exit from the nucleus and interference with FOXO3-dependent transcription. Phosphorylates BRAF and MAP3K3/MEKK3 and inhibits their activity. Phosphorylates SLC9A3/NHE3 in response to dexamethasone, resulting in its activation and increased localization at the cell membrane. Phosphorylates CREB1. Necessary for vascular remodeling during angiogenesis. The polypeptide is Serine/threonine-protein kinase Sgk1 (SGK1) (Bos taurus (Bovine)).